The sequence spans 465 residues: Putative apoptosis inhibitor ORF106 (465 aa).

The stretch at 291–357 (RECSFSTWPK…MEKETCGWLE (67 aa)) is one BIR repeat. Acidic residues predominate over residues 373-382 (EGGEDKEEDG). A disordered region spans residues 373 to 393 (EGGEDKEEDGGGGGVIEFPKN). Residues 405-447 (CKACYERKADIAFIPCGHVFSCNICTMEMFASYKKKKRCPMCR) form an RING-type zinc finger.

The protein is Putative apoptosis inhibitor ORF106 of Magallana gigas (Pacific oyster).